The chain runs to 219 residues: Octanoyltransferase (219 aa).

The BPL/LPL catalytic domain maps to 31–206 (DEDVDQIWLV…ELVELLGYDQ (176 aa)). Substrate contacts are provided by residues 70 to 77 (RGGQVTYH), 137 to 139 (SLG), and 150 to 152 (GLA). The Acyl-thioester intermediate role is filled by Cys168.

Belongs to the LipB family.

It localises to the cytoplasm. It catalyses the reaction octanoyl-[ACP] + L-lysyl-[protein] = N(6)-octanoyl-L-lysyl-[protein] + holo-[ACP] + H(+). It functions in the pathway protein modification; protein lipoylation via endogenous pathway; protein N(6)-(lipoyl)lysine from octanoyl-[acyl-carrier-protein]: step 1/2. Catalyzes the transfer of endogenously produced octanoic acid from octanoyl-acyl-carrier-protein onto the lipoyl domains of lipoate-dependent enzymes. Lipoyl-ACP can also act as a substrate although octanoyl-ACP is likely to be the physiological substrate. In Vibrio atlanticus (strain LGP32) (Vibrio splendidus (strain Mel32)), this protein is Octanoyltransferase.